Consider the following 409-residue polypeptide: uncharacterized protein (409 aa).

The first 29 residues, methionine 1–threonine 29, serve as a signal peptide directing secretion. Cysteine 30 carries the N-palmitoyl cysteine lipid modification. Cysteine 30 carries the S-diacylglycerol cysteine lipid modification.

This sequence belongs to the TP013X lipoprotein family.

Its subcellular location is the cell membrane. This is an uncharacterized protein from Treponema pallidum (strain Nichols).